We begin with the raw amino-acid sequence, 707 residues long: Integrator complex subunit 13 (707 aa).

Basic and acidic residues predominate over residues 565–625 (PPEEEERKKR…AEAEVIKDSP (61 aa)). Residues 565–651 (PPEEEERKKR…TGPAEKSKGP (87 aa)) form a disordered region. A coiled-coil region spans residues 567–622 (EEEERKKRGRKREDKEEKAEKPPKENEHEKKWQESERVKSVLDREKEDLAEAEVIK). The Nuclear localization signal (NLS) motif lies at 573–583 (KRGRKREDKEE). Residues 650-695 (GPMSLLSLWSSRINTANSRKHQEFVGRLNSVNNKAELYQHLKEENG) are cleavage module binding motif (CMBM).

This sequence belongs to the Integrator subunit 13 family. In terms of assembly, component of the Integrator complex, composed of core subunits INTS1, INTS2, INTS3, INTS4, INTS5, INTS6, INTS7, INTS8, INTS9/RC74, INTS10, INTS11/CPSF3L, INTS12, INTS13, INTS14 and INTS15. The core complex associates with protein phosphatase 2A subunits PPP2CA and PPP2R1A, to form the Integrator-PP2A (INTAC) complex. INTS13 is part of the tail subcomplex, composed of INTS10, INTS13, INTS14 and INTS15.

The protein localises to the nucleus. The protein resides in the cytoplasm. Its function is as follows. Component of the integrator complex, a multiprotein complex that terminates RNA polymerase II (Pol II) transcription in the promoter-proximal region of genes. The integrator complex provides a quality checkpoint during transcription elongation by driving premature transcription termination of transcripts that are unfavorably configured for transcriptional elongation: the complex terminates transcription by (1) catalyzing dephosphorylation of the C-terminal domain (CTD) of Pol II subunit POLR2A/RPB1 and SUPT5H/SPT5, (2) degrading the exiting nascent RNA transcript via endonuclease activity and (3) promoting the release of Pol II from bound DNA. The integrator complex is also involved in terminating the synthesis of non-coding Pol II transcripts, such as enhancer RNAs (eRNAs), small nuclear RNAs (snRNAs), telomerase RNAs and long non-coding RNAs (lncRNAs). Within the integrator complex, INTS13 is part of the integrator tail module and acts as a platform for the recruitment of transcription factors at promoters. This chain is Integrator complex subunit 13, found in Xenopus tropicalis (Western clawed frog).